The sequence spans 351 residues: Fruit bromelain (351 aa).

A signal peptide spans M1–A24. Positions S25–S121 are cleaved as a propeptide — activation peptide. N119 carries N-linked (GlcNAc...) asparagine glycosylation. Intrachain disulfides connect C144–C184, C178–C217, and C273–C325. C147 is an active-site residue. Catalysis depends on residues H279 and N300.

The protein belongs to the peptidase C1 family.

It carries out the reaction Hydrolysis of proteins with broad specificity for peptide bonds. Bz-Phe-Val-Arg-|-NHMec is a good synthetic substrate, but there is no action on Z-Arg-Arg-|-NHMec (cf. stem bromelain).. Its function is as follows. Cysteine proteinase with a high level of diversity in substrate specificity. The chain is Fruit bromelain from Ananas comosus (Pineapple).